A 418-amino-acid chain; its full sequence is UDP-N-acetylglucosamine 1-carboxyvinyltransferase (418 aa).

A phosphoenolpyruvate-binding site is contributed by 22-23 (KN). Residue Arg-92 participates in UDP-N-acetyl-alpha-D-glucosamine binding. The active-site Proton donor is Cys-116. The residue at position 116 (Cys-116) is a 2-(S-cysteinyl)pyruvic acid O-phosphothioketal. Positions 305 and 327 each coordinate UDP-N-acetyl-alpha-D-glucosamine.

Belongs to the EPSP synthase family. MurA subfamily.

The protein localises to the cytoplasm. It catalyses the reaction phosphoenolpyruvate + UDP-N-acetyl-alpha-D-glucosamine = UDP-N-acetyl-3-O-(1-carboxyvinyl)-alpha-D-glucosamine + phosphate. It participates in cell wall biogenesis; peptidoglycan biosynthesis. Its function is as follows. Cell wall formation. Adds enolpyruvyl to UDP-N-acetylglucosamine. The protein is UDP-N-acetylglucosamine 1-carboxyvinyltransferase of Gluconobacter oxydans (strain 621H) (Gluconobacter suboxydans).